A 406-amino-acid chain; its full sequence is E3 ubiquitin-protein ligase RING1 (406 aa).

At T24 the chain carries Phosphothreonine. The interval 30–234 (MDGTEIAVSP…GGAGSEDSGD (205 aa)) is necessary for transcriptional repression. A Phosphoserine modification is found at S38. The RING-type zinc finger occupies 48-88 (CPICLDMLKNTMTTKECLHRFCSDCIVTALRSGNKECPTCR). 3 positions are modified to phosphoserine: S140, S187, and S190. 2 disordered regions span residues 148–263 (QAMH…GEIE) and 309–354 (QQQE…PSLE). Residues 175–187 (EPGEGEGDGEDVS) are compositionally biased toward acidic residues. Positions 201-204 (KRPR) match the Nuclear localization signal motif. Residues 205–228 (GGGAGGSSVGTGGGGTGGVGGGAG) show a composition bias toward gly residues. 2 positions are modified to phosphothreonine: T215 and T220. Residues S229 and S232 each carry the phosphoserine modification. Positions 230-406 (EDSGDRGGTL…LCYAPTKDPK (177 aa)) are necessary for interaction with CBX2. Positions 235–244 (RGGTLGGGTL) are enriched in gly residues. Pro residues predominate over residues 246 to 258 (PPSPPGAPSPPEP). A phosphoserine mark is found at S248 and S254. Over residues 315–343 (EPGGPGGGASDTGGPDGCGGEGGGAGGGD) the composition is skewed to gly residues.

Component of chromatin-associated Polycomb (PcG) complexes. Interacts with BMI1. Part of the E2F6.com-1 complex in G0 phase composed of E2F6, MGA, MAX, TFDP1, CBX3, BAT8, EUHMTASE1, RING1, RNF2/RING2 MBLR, L3MBTL2 and YAF2. Interacts with CBX2 and PCGF6. Component of a PRC1-like complex. Component of repressive BCOR complex containing Polycomb group subcomplex at least composed of RYBP, PCGF1, BCOR and RNF2/RING2. Interacts with PCGF2, RNF2; CBX6, CBX7 and CBX8. Interacts with PHC2. Interacts with MN1. Interacts with USP26.

It localises to the nucleus. Its subcellular location is the nucleus speckle. It catalyses the reaction S-ubiquitinyl-[E2 ubiquitin-conjugating enzyme]-L-cysteine + [acceptor protein]-L-lysine = [E2 ubiquitin-conjugating enzyme]-L-cysteine + N(6)-ubiquitinyl-[acceptor protein]-L-lysine.. It participates in protein modification; protein ubiquitination. In terms of biological role, constitutes one of the E3 ubiquitin-protein ligases that mediate monoubiquitination of 'Lys-119' of histone H2A, thereby playing a central role in histone code and gene regulation. H2A 'Lys-119' ubiquitination gives a specific tag for epigenetic transcriptional repression and participates in X chromosome inactivation of female mammals. Essential component of a Polycomb group (PcG) multiprotein PRC1-like complex, a complex class required to maintain the transcriptionally repressive state of many genes, including Hox genes, throughout development. PcG PRC1 complex acts via chromatin remodeling and modification of histones, rendering chromatin heritably changed in its expressibility. Compared to RNF2/RING2, it does not have the main E3 ubiquitin ligase activity on histone H2A, and it may rather act as a modulator of RNF2/RING2 activity. The chain is E3 ubiquitin-protein ligase RING1 from Homo sapiens (Human).